A 79-amino-acid polypeptide reads, in one-letter code: Translational regulator CsrA (79 aa).

Belongs to the CsrA/RsmA family. As to quaternary structure, homodimer; the beta-strands of each monomer intercalate to form a hydrophobic core, while the alpha-helices form wings that extend away from the core.

It is found in the cytoplasm. Its function is as follows. A translational regulator that binds mRNA to regulate translation initiation and/or mRNA stability. Usually binds in the 5'-UTR at or near the Shine-Dalgarno sequence preventing ribosome-binding, thus repressing translation. Its main target seems to be the major flagellin gene, while its function is anatagonized by FliW. In Solidesulfovibrio magneticus (strain ATCC 700980 / DSM 13731 / RS-1) (Desulfovibrio magneticus), this protein is Translational regulator CsrA.